The chain runs to 238 residues: NAD(P)H-quinone oxidoreductase subunit K 1 (238 aa).

Residues Cys54, Cys55, Cys119, and Cys150 each coordinate [4Fe-4S] cluster.

This sequence belongs to the complex I 20 kDa subunit family. As to quaternary structure, NDH-1 can be composed of about 15 different subunits; different subcomplexes with different compositions have been identified which probably have different functions. [4Fe-4S] cluster serves as cofactor.

The protein localises to the cellular thylakoid membrane. It carries out the reaction a plastoquinone + NADH + (n+1) H(+)(in) = a plastoquinol + NAD(+) + n H(+)(out). It catalyses the reaction a plastoquinone + NADPH + (n+1) H(+)(in) = a plastoquinol + NADP(+) + n H(+)(out). In terms of biological role, NDH-1 shuttles electrons from an unknown electron donor, via FMN and iron-sulfur (Fe-S) centers, to quinones in the respiratory and/or the photosynthetic chain. The immediate electron acceptor for the enzyme in this species is believed to be plastoquinone. Couples the redox reaction to proton translocation, and thus conserves the redox energy in a proton gradient. Cyanobacterial NDH-1 also plays a role in inorganic carbon-concentration. The polypeptide is NAD(P)H-quinone oxidoreductase subunit K 1 (Cyanothece sp. (strain PCC 7425 / ATCC 29141)).